The chain runs to 1170 residues: Probable mRNA-capping enzyme (1170 aa).

The active-site N6-GMP-lysine intermediate is the lysine 292. The mRNA cap 0 methyltransferase domain maps to 684 to 1007 (SNAAGMRAFN…LNRYYVFRKT (324 aa)). 693-694 (NN) lines the mRNA pocket. Residues lysine 697, glycine 715, aspartate 737, and 813–815 (QFT) contribute to the S-adenosyl-L-methionine site.

The protein in the N-terminal section; belongs to the dsDNA virus mRNA guanylyltransferase family. In the C-terminal section; belongs to the class I-like SAM-binding methyltransferase superfamily. mRNA cap 0 methyltransferase family.

Its subcellular location is the virion. It catalyses the reaction a 5'-end triphospho-ribonucleoside in mRNA + H2O = a 5'-end diphospho-ribonucleoside in mRNA + phosphate + H(+). The enzyme catalyses a 5'-end diphospho-ribonucleoside in mRNA + GTP + H(+) = a 5'-end (5'-triphosphoguanosine)-ribonucleoside in mRNA + diphosphate. The catalysed reaction is a 5'-end (5'-triphosphoguanosine)-ribonucleoside in mRNA + S-adenosyl-L-methionine = a 5'-end (N(7)-methyl 5'-triphosphoguanosine)-ribonucleoside in mRNA + S-adenosyl-L-homocysteine. The protein operates within mRNA processing; mRNA capping. Functionally, responsible for methylating the 5'-cap structure of mRNAs. The protein is Probable mRNA-capping enzyme of Acanthamoeba polyphaga mimivirus (APMV).